The following is a 189-amino-acid chain: Orotate phosphoribosyltransferase (189 aa).

Residues R94, K95, K98, and 120-128 each bind 5-phospho-alpha-D-ribose 1-diphosphate; that span reads EDVTTTGGS. The orotate site is built by T124 and R152.

This sequence belongs to the purine/pyrimidine phosphoribosyltransferase family. PyrE subfamily. In terms of assembly, homodimer. Mg(2+) serves as cofactor.

It carries out the reaction orotidine 5'-phosphate + diphosphate = orotate + 5-phospho-alpha-D-ribose 1-diphosphate. The protein operates within pyrimidine metabolism; UMP biosynthesis via de novo pathway; UMP from orotate: step 1/2. Its function is as follows. Catalyzes the transfer of a ribosyl phosphate group from 5-phosphoribose 1-diphosphate to orotate, leading to the formation of orotidine monophosphate (OMP). This chain is Orotate phosphoribosyltransferase, found in Thermococcus gammatolerans (strain DSM 15229 / JCM 11827 / EJ3).